Consider the following 409-residue polypeptide: Elongation factor Tu (409 aa).

Residues Lys-10–Glu-214 form the tr-type G domain. A G1 region spans residues Gly-19–Thr-26. Gly-19 to Thr-26 serves as a coordination point for GTP. Residue Thr-26 participates in Mg(2+) binding. Residues Gly-60–Asn-64 are G2. The interval Asp-81–Gly-84 is G3. GTP contacts are provided by residues Asp-81 to His-85 and Asn-136 to Asp-139. The G4 stretch occupies residues Asn-136–Asp-139. Positions Ser-174 to Lys-176 are G5.

The protein belongs to the TRAFAC class translation factor GTPase superfamily. Classic translation factor GTPase family. EF-Tu/EF-1A subfamily. As to quaternary structure, monomer.

Its subcellular location is the cytoplasm. It carries out the reaction GTP + H2O = GDP + phosphate + H(+). Functionally, GTP hydrolase that promotes the GTP-dependent binding of aminoacyl-tRNA to the A-site of ribosomes during protein biosynthesis. In Microcystis aeruginosa (strain NIES-843 / IAM M-2473), this protein is Elongation factor Tu.